The chain runs to 1142 residues: Potassium channel subfamily T member 2 (1142 aa).

Topologically, residues 1–63 (MVDLESEVPP…KNQRSSLRIR (63 aa)) are cytoplasmic. Residues 64-84 (LFNFSLKLLSCLLYIIRVLLE) traverse the membrane as a helical segment. Residues 85 to 101 (KPSQGNDWSHIFWVNRS) lie on the Extracellular side of the membrane. A glycan (N-linked (GlcNAc...) asparagine) is linked at Asn99. The chain crosses the membrane as a helical span at residues 102 to 122 (LPLWGLQVSVALISLFETILL). Over 123–137 (GYLSYKGNIWEQILR) the chain is Cytoplasmic. The helical transmembrane segment at 138–158 (VPFILEIINAVPFIISIFWPT) threads the bilayer. Over 159–160 (LR) the chain is Extracellular. Residues 161 to 173 (NLFVPVFLNCWLA) traverse the membrane as a helical segment. The Cytoplasmic portion of the chain corresponds to 174–198 (KHALENMINDLHRAIQRTQSAMFNQ). The helical transmembrane segment at 199-219 (VLILISTLLCLIFTCICGIQH) threads the bilayer. The Extracellular segment spans residues 220–228 (LERIGKKLN). An intramembrane region (pore-forming) is located at residues 229–249 (LFDSLYFCIVTFSTVGFGDVT). Residues 250–256 (PETWSSK) lie on the Extracellular side of the membrane. A helical transmembrane segment spans residues 257-277 (LFVVAMICVALVVLPIQFEQL). Topologically, residues 278-1142 (AYLWMERQKS…VQDSREETQL (865 aa)) are cytoplasmic. RCK N-terminal domains follow at residues 299–435 (EKHV…DHVV) and 725–865 (NKLI…CYSL). 2 disordered regions span residues 989–1044 (DTKD…EKIT) and 1118–1142 (PNSE…ETQL). The span at 1017–1037 (LRRKSMQWARRLSRKGPKHSG) shows a compositional bias: basic residues. A compositionally biased stretch (polar residues) spans 1118–1129 (PNSEPSRKNSIC).

The protein belongs to the potassium channel family. Calcium-activated (TC 1.A.1.3) subfamily. KCa4.2/KCNT2 sub-subfamily. In terms of assembly, homotetramer. Forms heteromer with KCNT1; heteromeric channels differ from those of homomeric channels in their unitary conductance, kinetic behavior, subcellular localization, and response to activation of protein kinase C. Post-translationally, phosphorylated by protein kinase C. Phosphorylation of the C-terminal domain inhibits channel activity. As to expression, detected in brain, and at low levels in heart. Detected in brainstem, including auditory neurons such as the medial nucleus of the trapezoid body. Detected in the olfactory bulb, red nucleus, facial nucleus, pontine nucleus, oculomotor nucleus, substantia nigra, deep cerebellar nuclei, vestibular nucleus, and the thalamus. Detected in hippocampal CA1, CA2, and CA3 regions, the dentate gyrus, supraoptic nucleus, hypothalamus, dorsal root ganglion, and cortical layers II, III, and V. Detected in striatum cholinergic interneurons.

The protein resides in the cell membrane. The enzyme catalyses K(+)(in) = K(+)(out). Its activity is regulated as follows. Are normally in a closed state unless activated by an increase in intracellular Na(+) and Cl(-). Inhibited upon stimulation of G-protein coupled receptors, such as CHRM1 and GRM1. There is conflicting data about the effect of ATP on KNCT2 channels activity. Intracellular ATP was initially report to inhibit the channel activity. However, others studies conclude that KNCT2 channels are not inhibited by intracellular ATP. In terms of biological role, sodium-activated and chloride-activated potassium channel. Produces rapidly activating outward rectifier K(+) currents. Contributes to regulate neuronal excitability. This chain is Potassium channel subfamily T member 2 (Kcnt2), found in Rattus norvegicus (Rat).